The primary structure comprises 393 residues: Formate-dependent phosphoribosylglycinamide formyltransferase (393 aa).

N(1)-(5-phospho-beta-D-ribosyl)glycinamide is bound by residues 22–23 (EL) and E82. Residues R114, K155, 160-165 (SSGKGQ), 195-198 (EGFI), and E203 each bind ATP. The ATP-grasp domain maps to 119–308 (RLAAEELDLP…QFALHARAIL (190 aa)). Mg(2+) contacts are provided by E267 and E279. N(1)-(5-phospho-beta-D-ribosyl)glycinamide-binding positions include D286, K356, and 363–364 (RR).

It belongs to the PurK/PurT family. Homodimer.

The enzyme catalyses N(1)-(5-phospho-beta-D-ribosyl)glycinamide + formate + ATP = N(2)-formyl-N(1)-(5-phospho-beta-D-ribosyl)glycinamide + ADP + phosphate + H(+). It participates in purine metabolism; IMP biosynthesis via de novo pathway; N(2)-formyl-N(1)-(5-phospho-D-ribosyl)glycinamide from N(1)-(5-phospho-D-ribosyl)glycinamide (formate route): step 1/1. Involved in the de novo purine biosynthesis. Catalyzes the transfer of formate to 5-phospho-ribosyl-glycinamide (GAR), producing 5-phospho-ribosyl-N-formylglycinamide (FGAR). Formate is provided by PurU via hydrolysis of 10-formyl-tetrahydrofolate. In Pseudomonas entomophila (strain L48), this protein is Formate-dependent phosphoribosylglycinamide formyltransferase.